The following is a 205-amino-acid chain: Protein-L-isoaspartate O-methyltransferase (205 aa).

Residue Ser-56 is part of the active site.

The protein belongs to the methyltransferase superfamily. L-isoaspartyl/D-aspartyl protein methyltransferase family.

It is found in the cytoplasm. The catalysed reaction is [protein]-L-isoaspartate + S-adenosyl-L-methionine = [protein]-L-isoaspartate alpha-methyl ester + S-adenosyl-L-homocysteine. In terms of biological role, catalyzes the methyl esterification of L-isoaspartyl residues in peptides and proteins that result from spontaneous decomposition of normal L-aspartyl and L-asparaginyl residues. It plays a role in the repair and/or degradation of damaged proteins. This is Protein-L-isoaspartate O-methyltransferase from Pyrobaculum arsenaticum (strain DSM 13514 / JCM 11321 / PZ6).